Consider the following 174-residue polypeptide: 3-hydroxyanthranilate 3,4-dioxygenase (174 aa).

R47 contributes to the O2 binding site. The Fe cation site is built by H51, E57, and H95. E57 contributes to the substrate binding site. Substrate is bound by residues R99 and E110. Fe cation-binding residues include C125, C128, C162, and C165.

It belongs to the 3-HAO family. In terms of assembly, homodimer. Fe(2+) is required as a cofactor.

The catalysed reaction is 3-hydroxyanthranilate + O2 = (2Z,4Z)-2-amino-3-carboxymuconate 6-semialdehyde. It participates in cofactor biosynthesis; NAD(+) biosynthesis; quinolinate from L-kynurenine: step 3/3. In terms of biological role, catalyzes the oxidative ring opening of 3-hydroxyanthranilate to 2-amino-3-carboxymuconate semialdehyde, which spontaneously cyclizes to quinolinate. In Paraburkholderia phytofirmans (strain DSM 17436 / LMG 22146 / PsJN) (Burkholderia phytofirmans), this protein is 3-hydroxyanthranilate 3,4-dioxygenase.